The chain runs to 498 residues: U4/U6 small nuclear ribonucleoprotein Prp31 (498 aa).

2 coiled-coil regions span residues 84-119 (EAAP…KYSK) and 180-214 (DEEL…MSFI). The region spanning 214 to 332 (IAPNLSIIVG…IERKFDKWQE (119 aa)) is the Nop domain. The interval 333–356 (PPPVKQVKPLPAPLDGQRKKRGGR) is disordered. The Nuclear localization signal (NLS) motif lies at 350 to 363 (RKKRGGRRYRKMKE).

It belongs to the PRP31 family. Identified in the spliceosome B complex. Component of the U4/U6-U5 tri-snRNP complex. Component of some MLL1/MLL complex.

The protein localises to the nucleus. It localises to the nucleus speckle. The protein resides in the cajal body. In terms of biological role, involved in pre-mRNA splicing as component of the spliceosome. Required for the assembly of the U4/U5/U6 tri-snRNP complex, one of the building blocks of the spliceosome. This chain is U4/U6 small nuclear ribonucleoprotein Prp31 (prpf31), found in Xenopus tropicalis (Western clawed frog).